Consider the following 138-residue polypeptide: Putative pre-16S rRNA nuclease (138 aa).

The protein belongs to the YqgF nuclease family.

It is found in the cytoplasm. In terms of biological role, could be a nuclease involved in processing of the 5'-end of pre-16S rRNA. In Clostridium tetani (strain Massachusetts / E88), this protein is Putative pre-16S rRNA nuclease.